We begin with the raw amino-acid sequence, 369 residues long: MTSKKFDFTEYSHRRYNPLTDSYVLCSPHRAKRPWQGAKEEIKKDDTVKYDPTCYLCPGNIRATGFENPKYETTYVFPNDYPAVRVDQPDYMQDESEITKGNTLKTRMFKTEGVKGKCFVICFCPNHNLTLPLMSAEAICNVVETWKHLYVTLKKESLEGPIRYKYLQIFENKGSAMGCSNPHPHGQAWCLDVIPSVVAQEMCNMTKYFELNNSHLLGDYVKLEMLEKERIVVENDSFIVVVPYWALWPFETLLIAKEHLKSLEEFEEKQKVDLASALKMLTTKYDNLFNTSFPYSMGLHQAPLYGSNEEVENSWFHMHFYPPLLRSATVKKFCVGFEMLGEPQRDLTSEQAAARLQELDGQKHYKNLL.

2 residues coordinate Zn(2+): Cys-54 and Cys-57. UDP-alpha-D-glucose is bound by residues Ala-63 and 79 to 80 (ND). His-127 contributes to the Zn(2+) binding site. Asn-172 is a binding site for UDP-alpha-D-glucose. Residue His-183 coordinates Zn(2+). His-185 serves as the catalytic Tele-UMP-histidine intermediate. Residue Gln-187 coordinates UDP-alpha-D-glucose. Fe cation contacts are provided by Glu-201, His-300, His-317, and His-319. UDP-alpha-D-glucose is bound by residues 332 to 335 (KFCV) and 337 to 338 (FE).

Belongs to the galactose-1-phosphate uridylyltransferase type 1 family. Homodimer. It depends on Zn(2+) as a cofactor.

It carries out the reaction alpha-D-galactose 1-phosphate + UDP-alpha-D-glucose = alpha-D-glucose 1-phosphate + UDP-alpha-D-galactose. It functions in the pathway carbohydrate metabolism; galactose metabolism. This Schizosaccharomyces pombe (strain 972 / ATCC 24843) (Fission yeast) protein is Galactose-1-phosphate uridylyltransferase (gal7).